A 159-amino-acid polypeptide reads, in one-letter code: Regulatory protein RecX (159 aa).

It belongs to the RecX family.

It localises to the cytoplasm. Modulates RecA activity. The protein is Regulatory protein RecX of Acinetobacter baylyi (strain ATCC 33305 / BD413 / ADP1).